The chain runs to 363 residues: Phosphoserine aminotransferase (363 aa).

Residue arginine 42 participates in L-glutamate binding. Pyridoxal 5'-phosphate-binding positions include 76–77, tryptophan 102, threonine 156, aspartate 175, and glutamine 198; that span reads GR. Residue lysine 199 is modified to N6-(pyridoxal phosphate)lysine. Pyridoxal 5'-phosphate is bound at residue 240 to 241; sequence NT.

Belongs to the class-V pyridoxal-phosphate-dependent aminotransferase family. SerC subfamily. As to quaternary structure, homodimer. Pyridoxal 5'-phosphate serves as cofactor.

It is found in the cytoplasm. The catalysed reaction is O-phospho-L-serine + 2-oxoglutarate = 3-phosphooxypyruvate + L-glutamate. It carries out the reaction 4-(phosphooxy)-L-threonine + 2-oxoglutarate = (R)-3-hydroxy-2-oxo-4-phosphooxybutanoate + L-glutamate. The protein operates within amino-acid biosynthesis; L-serine biosynthesis; L-serine from 3-phospho-D-glycerate: step 2/3. It functions in the pathway cofactor biosynthesis; pyridoxine 5'-phosphate biosynthesis; pyridoxine 5'-phosphate from D-erythrose 4-phosphate: step 3/5. Its function is as follows. Catalyzes the reversible conversion of 3-phosphohydroxypyruvate to phosphoserine and of 3-hydroxy-2-oxo-4-phosphonooxybutanoate to phosphohydroxythreonine. This Shewanella piezotolerans (strain WP3 / JCM 13877) protein is Phosphoserine aminotransferase.